We begin with the raw amino-acid sequence, 524 residues long: Na(+)/H(+) antiporter NhaB (524 aa).

9 helical membrane-spanning segments follow: residues 13 to 33 (FLGNSPDWYKLAIMGFLIINP), 98 to 118 (LLLVFMVAGIYFMKQLLLFVF), 140 to 160 (AFLSAFLDALTVIAVVISVSV), 239 to 259 (FFIRMLPVTLPVFIFGLLVCL), 304 to 324 (AIIGVWLVLALALHLAEVGLV), 325 to 345 (GLSVIILATSFCGITNEHSLG), 358 to 378 (LTVFFAVVAVIIEQSLFTPII), 448 to 468 (ATPNGQAAFLFLLTSALAPLI), and 479 to 499 (ALPYTLVMTIVGLLGVEFLLV).

The protein belongs to the NhaB Na(+)/H(+) (TC 2.A.34) antiporter family.

The protein localises to the cell inner membrane. It catalyses the reaction 2 Na(+)(in) + 3 H(+)(out) = 2 Na(+)(out) + 3 H(+)(in). Its function is as follows. Na(+)/H(+) antiporter that extrudes sodium in exchange for external protons. The chain is Na(+)/H(+) antiporter NhaB from Yersinia pestis (strain Pestoides F).